The chain runs to 312 residues: tRNA dimethylallyltransferase (312 aa).

17 to 24 (GPTASGKS) serves as a coordination point for ATP. 19–24 (TASGKS) contributes to the substrate binding site.

The protein belongs to the IPP transferase family. Monomer. It depends on Mg(2+) as a cofactor.

It carries out the reaction adenosine(37) in tRNA + dimethylallyl diphosphate = N(6)-dimethylallyladenosine(37) in tRNA + diphosphate. Catalyzes the transfer of a dimethylallyl group onto the adenine at position 37 in tRNAs that read codons beginning with uridine, leading to the formation of N6-(dimethylallyl)adenosine (i(6)A). The sequence is that of tRNA dimethylallyltransferase from Zymomonas mobilis subsp. mobilis (strain ATCC 31821 / ZM4 / CP4).